A 682-amino-acid chain; its full sequence is MSTIPVIEKRERADAKLFDGAVLLAAMRAAFLKLTPRHLLRSPVMAVVMGGTLLAAVITASGHGNAGFGWAVTAILFVTVLFGNFAEAIAEARGRGQAASLRRARKDLVARRVETALGGRETRVPAAELRPGDFVLVSEGEFVPADGEIVRGLATINEAAVTGESAPVLREAGTDRSGVIGGTRVLSDEIVFKVTAEPGQSFLDRMIALVEGANRQKTPNEIALTLLLAAMTLTFLIVVASLPAIAGFVGVTLDPLLLIALLVCLIPTTIGGLLPAIGIAGMNRAMSANVLAKSGKAVEVAGDVDVLLLDKTGTITYGDRQATVFHPLAGIDRAQLRDAAMLASLADPTPEGKSIVKLARQQGAVAVEPEDAHFIAFTAQTRMSGVDLAGRNIRKGAGDAIVAYVQAQGATVSPELNGRIEEVARGGATPLVVAEGRHVLGVVELSDVVKQGIKEKFAQLRAMGIKTVMITGDNPLTAAAIAAEAGVDDYIAQARPEDKLARIRAEQAGGRLVAMVGDGTNDAPALAQADVGLAMNSGTQAAKEAGNMVDLDSDPAKLLAVVEVGKQQLITRGALTTFSLANDVSKYFAILPALFAAAIPSMAALNVMHLSSPRHAVLAALIFNALIIPALIPLALRGVRFRPSSATALLRRNMLIYGLGGVLLPFAAIKLIDLALVATLGA.

Helical transmembrane passes span 44-64 (VMAVVMGGTLLAAVITASGHG), 66-86 (AGFGWAVTAILFVTVLFGNFA), 233-253 (LTFLIVVASLPAIAGFVGVTL), and 257-277 (LLIALLVCLIPTTIGGLLPAI). Asp-310 functions as the 4-aspartylphosphate intermediate in the catalytic mechanism. Residues Asp-347, Glu-351, 377-384 (FTAQTRMS), and Lys-395 contribute to the ATP site. Mg(2+) contacts are provided by Asp-518 and Asp-522. Transmembrane regions (helical) follow at residues 588-608 (FAILPALFAAAIPSMAALNVM), 616-636 (AVLAALIFNALIIPALIPLAL), and 658-678 (GLGGVLLPFAAIKLIDLALVA).

The protein belongs to the cation transport ATPase (P-type) (TC 3.A.3) family. Type IA subfamily. The system is composed of three essential subunits: KdpA, KdpB and KdpC.

It localises to the cell inner membrane. The catalysed reaction is K(+)(out) + ATP + H2O = K(+)(in) + ADP + phosphate + H(+). Part of the high-affinity ATP-driven potassium transport (or Kdp) system, which catalyzes the hydrolysis of ATP coupled with the electrogenic transport of potassium into the cytoplasm. This subunit is responsible for energy coupling to the transport system and for the release of the potassium ions to the cytoplasm. The sequence is that of Potassium-transporting ATPase ATP-binding subunit from Xanthomonas campestris pv. campestris (strain ATCC 33913 / DSM 3586 / NCPPB 528 / LMG 568 / P 25).